The following is a 312-amino-acid chain: 4-diphosphocytidyl-2-C-methyl-D-erythritol kinase (312 aa).

Residue Lys18 is part of the active site. Position 104 to 114 (104 to 114 (PIAGGMGGGSA)) interacts with ATP. The active site involves Asp146.

This sequence belongs to the GHMP kinase family. IspE subfamily.

The enzyme catalyses 4-CDP-2-C-methyl-D-erythritol + ATP = 4-CDP-2-C-methyl-D-erythritol 2-phosphate + ADP + H(+). Its pathway is isoprenoid biosynthesis; isopentenyl diphosphate biosynthesis via DXP pathway; isopentenyl diphosphate from 1-deoxy-D-xylulose 5-phosphate: step 3/6. In terms of biological role, catalyzes the phosphorylation of the position 2 hydroxy group of 4-diphosphocytidyl-2C-methyl-D-erythritol. In Clavibacter michiganensis subsp. michiganensis (strain NCPPB 382), this protein is 4-diphosphocytidyl-2-C-methyl-D-erythritol kinase.